A 109-amino-acid chain; its full sequence is Class I hydrophobin SC1 (109 aa).

The first 22 residues, 1 to 22 (MRFSLAILALPVLAAATAVPRG), serve as a signal peptide directing secretion. Intrachain disulfides connect cysteine 27/cysteine 88, cysteine 34/cysteine 82, cysteine 35/cysteine 69, and cysteine 89/cysteine 102.

Belongs to the fungal hydrophobin family. Self-assembles to form functional amyloid fibrils called rodlets. Self-assembly into fibrillar rodlets occurs spontaneously at hydrophobic:hydrophilic interfaces and the rodlets further associate laterally to form amphipathic monolayers.

The protein resides in the secreted. Its subcellular location is the cell wall. Aerial growth, conidiation, and dispersal of filamentous fungi in the environment rely upon a capability of their secreting small amphipathic proteins called hydrophobins (HPBs) with low sequence identity. Class I can self-assemble into an outermost layer of rodlet bundles on aerial cell surfaces, conferring cellular hydrophobicity that supports fungal growth, development and dispersal; whereas Class II form highly ordered films at water-air interfaces through intermolecular interactions but contribute nothing to the rodlet structure. SC1 is a dikaryon-specific class I hydrophobin that contributes to the formation of aerial hyphae and fruiting bodies. The polypeptide is Class I hydrophobin SC1 (Schizophyllum commune (Split gill fungus)).